We begin with the raw amino-acid sequence, 304 residues long: Non-specific ribonucleoside hydrolase RihC (304 aa).

His233 is an active-site residue.

It belongs to the IUNH family. RihC subfamily.

Hydrolyzes both purine and pyrimidine ribonucleosides with a broad-substrate specificity. The sequence is that of Non-specific ribonucleoside hydrolase RihC from Escherichia coli O127:H6 (strain E2348/69 / EPEC).